Reading from the N-terminus, the 562-residue chain is Urocanate hydratase (562 aa).

Residues 52 to 53 (GG), Gln130, 176 to 178 (GMG), Glu196, Arg201, 242 to 243 (NA), 263 to 267 (QTSAH), 273 to 274 (YL), and Tyr322 contribute to the NAD(+) site. Residue Cys410 is part of the active site. An NAD(+)-binding site is contributed by Gly492.

This sequence belongs to the urocanase family. NAD(+) serves as cofactor.

It is found in the cytoplasm. The catalysed reaction is 4-imidazolone-5-propanoate = trans-urocanate + H2O. It participates in amino-acid degradation; L-histidine degradation into L-glutamate; N-formimidoyl-L-glutamate from L-histidine: step 2/3. Functionally, catalyzes the conversion of urocanate to 4-imidazolone-5-propionate. This chain is Urocanate hydratase, found in Shewanella pealeana (strain ATCC 700345 / ANG-SQ1).